Here is a 393-residue protein sequence, read N- to C-terminus: UDP-N-acetylglucosamine--N-acetylmuramyl-(pentapeptide) pyrophosphoryl-undecaprenol N-acetylglucosamine transferase (393 aa).

UDP-N-acetyl-alpha-D-glucosamine contacts are provided by residues 14–16 (TAG), N128, R170, S210, and Q321.

This sequence belongs to the glycosyltransferase 28 family. MurG subfamily.

The protein resides in the cell membrane. It catalyses the reaction di-trans,octa-cis-undecaprenyl diphospho-N-acetyl-alpha-D-muramoyl-L-alanyl-D-glutamyl-meso-2,6-diaminopimeloyl-D-alanyl-D-alanine + UDP-N-acetyl-alpha-D-glucosamine = di-trans,octa-cis-undecaprenyl diphospho-[N-acetyl-alpha-D-glucosaminyl-(1-&gt;4)]-N-acetyl-alpha-D-muramoyl-L-alanyl-D-glutamyl-meso-2,6-diaminopimeloyl-D-alanyl-D-alanine + UDP + H(+). It participates in cell wall biogenesis; peptidoglycan biosynthesis. Cell wall formation. Catalyzes the transfer of a GlcNAc subunit on undecaprenyl-pyrophosphoryl-MurNAc-pentapeptide (lipid intermediate I) to form undecaprenyl-pyrophosphoryl-MurNAc-(pentapeptide)GlcNAc (lipid intermediate II). The polypeptide is UDP-N-acetylglucosamine--N-acetylmuramyl-(pentapeptide) pyrophosphoryl-undecaprenol N-acetylglucosamine transferase (Bifidobacterium adolescentis (strain ATCC 15703 / DSM 20083 / NCTC 11814 / E194a)).